The following is a 223-amino-acid chain: RNA-free ribonuclease P (223 aa).

Belongs to the HARP family.

It carries out the reaction Endonucleolytic cleavage of RNA, removing 5'-extranucleotides from tRNA precursor.. Its function is as follows. RNA-free RNase P that catalyzes the removal of the 5'-leader sequence from pre-tRNA to produce the mature 5'-terminus. This Methanococcus maripaludis (strain C6 / ATCC BAA-1332) protein is RNA-free ribonuclease P.